The sequence spans 401 residues: Argininosuccinate synthase (401 aa).

9–17 (AYSGGLDTS) contributes to the ATP binding site. Tyr-86 is a binding site for L-citrulline. Gly-116 provides a ligand contact to ATP. Residues Thr-118, Asn-122, and Asp-123 each coordinate L-aspartate. Asn-122 contacts L-citrulline. L-citrulline-binding residues include Arg-126, Ser-174, Ser-183, Glu-259, and Tyr-271.

This sequence belongs to the argininosuccinate synthase family. Type 1 subfamily. As to quaternary structure, homotetramer.

The protein resides in the cytoplasm. It carries out the reaction L-citrulline + L-aspartate + ATP = 2-(N(omega)-L-arginino)succinate + AMP + diphosphate + H(+). It functions in the pathway amino-acid biosynthesis; L-arginine biosynthesis; L-arginine from L-ornithine and carbamoyl phosphate: step 2/3. The polypeptide is Argininosuccinate synthase (Bacillus thuringiensis subsp. konkukian (strain 97-27)).